A 595-amino-acid polypeptide reads, in one-letter code: Pyranose dehydrogenase (595 aa).

Residues 1–21 (MARFNARLFSIAILGFQVARS) form the signal peptide. 2 N-linked (GlcNAc...) asparagine glycosylation sites follow: asparagine 95 and asparagine 110. The residue at position 123 (histidine 123) is a Tele-8alpha-FAD histidine. 5 N-linked (GlcNAc...) asparagine glycosylation sites follow: asparagine 195, asparagine 337, asparagine 367, asparagine 502, and asparagine 510. Histidine 530 acts as the Proton acceptor in catalysis. N-linked (GlcNAc...) asparagine glycosylation occurs at asparagine 541. The active site involves histidine 574.

The protein belongs to the GMC oxidoreductase family. Monomer. FAD is required as a cofactor. Post-translationally, N-glycosylated.

The protein localises to the secreted. The enzyme catalyses pyranose + acceptor = pyranos-2-ulose + reduced acceptor.. It catalyses the reaction pyranose + acceptor = pyranos-3-ulose + reduced acceptor.. The catalysed reaction is pyranose + acceptor = pyranos-2,3-diulose + reduced acceptor.. It carries out the reaction a pyranoside + acceptor = a pyranosid-3-ulose + reduced acceptor.. The enzyme catalyses a pyranoside + acceptor = a pyranosid-3,4-diulose + reduced acceptor.. Functionally, catalyzes the single-oxidation or sequential double oxidation reaction of carbohydrates primarily at carbon-2 and/or carbon-3 with the concomitant reduction of the flavin. The enzyme exhibits a broad sugar substrate specificity, oxidizing different aldopyranoses to the corresponding C-1, C-2, C-3 or C-1,2, C-2,3 and C-3,4 (di)dehydro sugars with substrate-specific regioselectivity. Accepts only a narrow range of electron acceptors such as substituted benzoquinones and complexed metal ions and reacts extremely slowly with O(2) as acceptor. May play a role in the natural recycling of plant matter by oxidizing all major monosaccharides in lignocellulose and by reducing quinone compounds or reactive radical species generated during lignin depolymerization. The chain is Pyranose dehydrogenase from Agaricus campestris (Field mushroom).